The sequence spans 191 residues: Photosystem I assembly protein Ycf4 (191 aa).

2 helical membrane-spanning segments follow: residues 34–54 and 68–88; these read VASM…SSYF and IFVP…LLAI.

Belongs to the Ycf4 family.

The protein resides in the cellular thylakoid membrane. Functionally, seems to be required for the assembly of the photosystem I complex. The protein is Photosystem I assembly protein Ycf4 of Prochlorococcus marinus (strain NATL1A).